The sequence spans 359 residues: Pyruvate dehydrogenase E1 component subunit beta, mitochondrial (359 aa).

The N-terminal 30 residues, 1 to 30 (MAAVSGLVRRPLREVSRLLKRRFHWTAPAA), are a transit peptide targeting the mitochondrion. Tyr67 carries the phosphotyrosine modification. Glu89 is a thiamine diphosphate binding site. The K(+) site is built by Ile142, Ala190, Ile191, Asp193, and Asn195. N6-acetyllysine is present on Lys354.

As to quaternary structure, heterotetramer of two PDHA1 and two PDHB subunits. The heterotetramer interacts with DLAT, and is part of the multimeric pyruvate dehydrogenase complex that contains multiple copies of pyruvate dehydrogenase (E1), dihydrolipoamide acetyltransferase (DLAT, E2) and lipoamide dehydrogenase (DLD, E3). These subunits are bound to an inner core composed of about 48 DLAT and 12 PDHX molecules. Interacts with DLAT. Requires thiamine diphosphate as cofactor.

The protein localises to the mitochondrion matrix. It catalyses the reaction N(6)-[(R)-lipoyl]-L-lysyl-[protein] + pyruvate + H(+) = N(6)-[(R)-S(8)-acetyldihydrolipoyl]-L-lysyl-[protein] + CO2. In terms of biological role, the pyruvate dehydrogenase complex catalyzes the overall conversion of pyruvate to acetyl-CoA and CO(2), and thereby links the glycolytic pathway to the tricarboxylic cycle. The polypeptide is Pyruvate dehydrogenase E1 component subunit beta, mitochondrial (PDHB) (Pongo abelii (Sumatran orangutan)).